The chain runs to 482 residues: MNDLIKLSVAKMHLALARREISSLELVEAHLLQIRERNAHTNALILVTEEEARQRAKLADERLKRGESVNTLTGIPCVIKDMYCTKGVRTTAASRALRNFVPTYESTVTSKLIDAGAVMLGKANMDEFAMGSSNTSSFFGPVKNPLKGKKGVDLVPGGSSGGSAAAVADYYSPFSLGSDTGGSVRQPASFCGLVGLRPTYGRCSRWGMIPLANSLDQAGILSRNVEDNAAVFEVISGYDRKDSTCAKLEPFKYNKNPDIRHIKVGIPQECKVSGLSSHIVKLWESTANILRQLGAEIIDVSLPCVEYSLMVYYIICSAEASSQLARYDGIRYSPDPSISASTISELYEKYRSVSFGREVKRRLFMGTHVLSSSGYADYYAAAKELQEEIVNEYSAVFEKVDVILNPTAPNDAFPIDGKLEPLEMYMNDIFTVPTSVAKLPCISIPVGLSEDDMPLGMHLTANYFAEELLLNVALALQNALYK.

Residues Lys80 and Ser159 each act as charge relay system in the active site. Ser183 serves as the catalytic Acyl-ester intermediate.

Belongs to the amidase family. GatA subfamily. In terms of assembly, heterotrimer of A, B and C subunits.

It catalyses the reaction L-glutamyl-tRNA(Gln) + L-glutamine + ATP + H2O = L-glutaminyl-tRNA(Gln) + L-glutamate + ADP + phosphate + H(+). In terms of biological role, allows the formation of correctly charged Gln-tRNA(Gln) through the transamidation of misacylated Glu-tRNA(Gln) in organisms which lack glutaminyl-tRNA synthetase. The reaction takes place in the presence of glutamine and ATP through an activated gamma-phospho-Glu-tRNA(Gln). In Neorickettsia sennetsu (strain ATCC VR-367 / Miyayama) (Ehrlichia sennetsu), this protein is Glutamyl-tRNA(Gln) amidotransferase subunit A.